The chain runs to 899 residues: ATP-dependent DNA helicase DDX31 (899 aa).

2 stretches are compositionally biased toward basic residues: residues 1–12 (MNKHDQKKKRNK) and 21–31 (KKSKGFIKNKK). Residues 1-142 (MNKHDQKKKR…SKHKRNVPSK (142 aa)) are disordered. Residues 76 to 85 (NMNDDDDNNM) are compositionally biased toward acidic residues. Residues 86 to 102 (NDDYNNNNIKGDYNNNN) show a composition bias toward low complexity. The span at 106 to 121 (DDVDDDDYDDDDDDNF) shows a compositional bias: acidic residues. The short motif at 173-201 (FCDLKYILSESLINTLEKNEFIKMTSIQK) is the Q motif element. Residues 204–433 (IPLFFKPNDI…NYCLTNNTMW (230 aa)) form the Helicase ATP-binding domain. 217–224 (SMTGSGKT) contributes to the ATP binding site. A DEAD box motif is present at residues 332–335 (DEAD). Polar residues predominate over residues 463 to 472 (NRENSPLNIH). Residues 463–517 (NRENSPLNIHNNDDNDDNDDNDENNGDNNNNNDDNNNNNDDNNNKNNDDDNNNTY) are disordered. Residues 476–487 (DNDDNDDNDENN) are compositionally biased toward acidic residues. Residues 488–503 (GDNNNNNDDNNNNNDD) are compositionally biased toward low complexity. The Helicase C-terminal domain maps to 593 to 782 (KITPVLERED…TIINHFKKFC (190 aa)).

Belongs to the DEAD box helicase family. DDX31/DBP7 subfamily.

The protein localises to the nucleus. Its subcellular location is the nucleolus. It carries out the reaction ATP + H2O = ADP + phosphate + H(+). Its function is as follows. Has DNA helicase activity and may also have RNA helicase activity; the DNA helicase direction was not determined. Shows ssDNA and RNA dependent ATPase activity. In Plasmodium falciparum (isolate 3D7), this protein is ATP-dependent DNA helicase DDX31 (DDX31).